The following is a 35-amino-acid chain: Photosystem II reaction center protein Psb30 (35 aa).

The helical transmembrane segment at 6 to 26 threads the bilayer; it reads VIVQLVFLALIITTGPVIIVY.

It belongs to the Psb30/Ycf12 family. In terms of assembly, PSII is composed of 1 copy each of membrane proteins PsbA, PsbB, PsbC, PsbD, PsbE, PsbF, PsbH, PsbI, PsbJ, PsbK, PsbL, PsbM, PsbT, PsbY, PsbZ, Psb30/Ycf12, peripheral proteins of the oxygen-evolving complex and a large number of cofactors. It forms dimeric complexes.

The protein localises to the plastid. It is found in the chloroplast thylakoid membrane. Its function is as follows. A core subunit of photosystem II (PSII), probably helps stabilize the reaction center. This is Photosystem II reaction center protein Psb30 from Cyanidium caldarium (Red alga).